A 346-amino-acid chain; its full sequence is Signal recognition particle receptor FtsY (346 aa).

Residues Gly143–Thr150, Asp225–Arg229, and Thr289–Asp292 contribute to the GTP site.

Belongs to the GTP-binding SRP family. FtsY subfamily. As to quaternary structure, part of the signal recognition particle protein translocation system, which is composed of SRP and FtsY.

It is found in the cell membrane. It localises to the cytoplasm. It carries out the reaction GTP + H2O = GDP + phosphate + H(+). Functionally, involved in targeting and insertion of nascent membrane proteins into the cytoplasmic membrane. Acts as a receptor for the complex formed by the signal recognition particle (SRP) and the ribosome-nascent chain (RNC). This chain is Signal recognition particle receptor FtsY, found in Mycoplasma genitalium (strain ATCC 33530 / DSM 19775 / NCTC 10195 / G37) (Mycoplasmoides genitalium).